A 766-amino-acid chain; its full sequence is LPS-assembly protein LptD (766 aa).

Residues 1–18 (MQIRYFLALSLLPNIVLA) form the signal peptide.

It belongs to the LptD family. Component of the lipopolysaccharide transport and assembly complex. Interacts with LptE and LptA.

The protein localises to the cell outer membrane. Together with LptE, is involved in the assembly of lipopolysaccharide (LPS) at the surface of the outer membrane. In Shewanella frigidimarina (strain NCIMB 400), this protein is LPS-assembly protein LptD.